Consider the following 605-residue polypeptide: F-box/WD repeat-containing protein 1A (605 aa).

Residues 128 to 177 (ASYEKEKELCVKYFEQWSESDQVEFVEHLISQMCHYQHGHINSYLKPMLQ) form a homodimerization domain D region. The region spanning 182–228 (TALPARGLDHIAENILSYLDAKSLCAAELVCKEWYRVTSDGMLWKKL) is the F-box domain. The required for down-regulation of SNAI1 stretch occupies residues 190 to 228 (DHIAENILSYLDAKSLCAAELVCKEWYRVTSDGMLWKKL). WD repeat units lie at residues 301-338 (ETSK…CKRI), 341-378 (GHTG…MLNT), 381-418 (HHCE…DITL), 424-461 (GHRA…FVRT), 464-503 (GHKR…RVLE), 505-541 (HEEL…DPRA), and 553-590 (EHSG…AAHA).

Homodimer. Self-associates. Component of the SCF(BTRC) complex, composed of SKP1, CUL1 and BTRC. Direct interaction with SKP1 with SKP1 occurs via the F-box domain. Interacts with phosphorylated ubiquitination substrates SMAD3 and SMAD4. Interacts with phosphorylated ubiquitination substrates CTNNB1, NFKBIA, NFKBIB, NFKBIE, NFKB1/nuclear factor NF-kappa-B p105 subunit, ATF4, CDC25A, DLG1, FBXO5 and SNAI1; the interaction requires the phosphorylation of the 2 serine residues in the substrate destruction motif D-S-G-X(2,3,4)-S. Binds UBQLN1. Interacts with CDC34 and UBE2R2. Interacts with FBXW11. Interacts with CUL4A and DDB1. Part of a SCF(BTRC)-like complex lacking CUL1, which is associated with phosphorylated NKBIA and RELA; RELA interacts directly with NFKBIA. Interacts with the phosphorylated form of GLI3. Interacts with CLU. Interacts with PER1 (phosphorylated), PER2 (phosphorylated) and PER3. Interacts with phosphorylated ubiquitination substrate CEP68. Interacts with ZC3H12A; this interaction occurs when ZC3H12A is phosphorylated in a IKBKB/IKKB-dependent manner. Interacts with HSF1; this interaction occurs during mitosis and induces HSF1 ubiquitin-dependent degradation, a process inhibited by CDC20. Interacts with NFE2L1. Interacts with INAVA. Interacts with IL10RA; this interaction leads to IL10RA ubiquitination and subsequent degradation. Interacts with REST. Interacts with KLF4; this interaction leads to KLF4 ubiquitination and subsequent degradation. Interacts with UBR2, as part of a SCF(BTRC) complex; the interaction mediates 'Lys-48'-linked ubiquitination of UBR2 and is regulated by DUSP22 in the T-cell receptor signaling pathway. Ubiquitinated via 'Lys-11'-linked polyubiquitin by some cullin-5-RING E3 ubiquitin-protein ligase complex (ECS complex), leading to its degradation. Deubiquitinated by OTUD5, promoting its stability. As to expression, expressed in heart, brain, liver, skeletal muscle and, most strongly, in testis.

Its subcellular location is the cytoplasm. It localises to the nucleus. The protein operates within protein modification; protein ubiquitination. Functionally, substrate recognition component of a SCF (SKP1-CUL1-F-box protein) E3 ubiquitin-protein ligase complex which mediates the ubiquitination and subsequent proteasomal degradation of target proteins. Recognizes and binds to phosphorylated target proteins. SCF(BTRC) mediates the ubiquitination of phosphorylated NFKB, ATF4, CDC25A, DLG1, FBXO5, PER1, SMAD3, SMAD4, SNAI1 and probably NFKB2. SCF(BTRC) mediates the ubiquitination of CTNNB1 and participates in Wnt signaling. SCF(BTRC) mediates the ubiquitination of NFKBIA, NFKBIB and NFKBIE; the degradation frees the associated NFKB1 to translocate into the nucleus and to activate transcription. Ubiquitination of NFKBIA occurs at 'Lys-21' and 'Lys-22'. The SCF(FBXW11) complex also regulates NF-kappa-B by mediating ubiquitination of phosphorylated NFKB1: specifically ubiquitinates the p105 form of NFKB1, leading to its degradation. SCF(BTRC) mediates the ubiquitination of CEP68; this is required for centriole separation during mitosis. SCF(BTRC) mediates the ubiquitination and subsequent degradation of nuclear NFE2L1. Has an essential role in the control of the clock-dependent transcription via degradation of phosphorylated PER1 and PER2. May be involved in ubiquitination and subsequent proteasomal degradation through a DBB1-CUL4 E3 ubiquitin-protein ligase. Required for activation of NFKB-mediated transcription by IL1B, MAP3K14, MAP3K1, IKBKB and TNF. Required for proteolytic processing of GLI3. Mediates ubiquitination of REST, thereby leading to its proteasomal degradation. SCF(BTRC) mediates the ubiquitination and subsequent proteasomal degradation of KLF4; thereby negatively regulating cell pluripotency maintenance and embryogenesis. SCF(BTRC) acts as a regulator of mTORC1 signaling pathway by catalyzing ubiquitination and subsequent proteasomal degradation of phosphorylated DEPTOR, TFE3 and MITF. SCF(BTRC) directs 'Lys-48'-linked ubiquitination of UBR2 in the T-cell receptor signaling pathway. This Mus musculus (Mouse) protein is F-box/WD repeat-containing protein 1A.